The primary structure comprises 359 residues: Outer membrane protein P5 (359 aa).

The N-terminal stretch at 1–21 (MKKTAIALVVAGLAAASVAQA) is a signal peptide. Transmembrane regions (beta stranded) follow at residues 27–37 (TFYAGVKAGQG), 64–75 (TFTYGVFGGYQI), 83–91 (LAAELGYDD), 110–121 (HGAYLSLKGSYE), 126–134 (LDVYGKAGV), 164–173 (GLFAVGAEYA), 178–185 (LAVRLEYQ), and 211–219 (CINAGISYR). Residues 233–359 (MVSKTFSLNS…RVEIAVNGTK (127 aa)) enclose the OmpA-like domain. Cys332 and Cys344 form a disulfide bridge.

This sequence belongs to the outer membrane OOP (TC 1.B.6) superfamily. OmpA family. In terms of assembly, monomer and homodimer.

The protein localises to the cell outer membrane. It is found in the fimbrium. In terms of biological role, acts as a fimbriae subunit, allowing adhesion to host cells. Its function is as follows. With TolR probably plays a role in maintaining the position of the peptidoglycan cell wall in the periplasm. Acts as a porin with low permeability that allows slow penetration of small solutes; an internal gate slows down solute passage. In Haemophilus influenzae, this protein is Outer membrane protein P5.